The chain runs to 347 residues: Protein phosphatase 1 regulatory subunit 3G (347 aa).

The interval 1–77 is disordered; that stretch reads MDPSGEQLHR…ELQEYRRSRA (77 aa). The segment covering 13–22 has biased composition (polar residues); that stretch reads ASSSTSSGDP. Residue Ser-81 is modified to Phosphoserine. In terms of domain architecture, CBM21 spans 200-339; it reads EERLRRQRVC…NNEGANYTLR (140 aa). The interval 258-286 is disordered; sequence DPESVEPLPPLQSGDSGSKAEDSEEGPGT.

Its function is as follows. Glycogen-targeting subunit for protein phosphatase 1 (PP1). Involved in the regulation of hepatic glycogenesis in a manner coupled to the fasting-feeding cycle and distinct from other glycogen-targeting subunits. The polypeptide is Protein phosphatase 1 regulatory subunit 3G (Ppp1r3g) (Mus musculus (Mouse)).